Consider the following 556-residue polypeptide: Undecaprenyl phosphate-alpha-4-amino-4-deoxy-L-arabinose arabinosyl transferase (556 aa).

Helical transmembrane passes span 5–25 (MIKLKSTVILVLFALLYLLPL), 88–108 (FASVFSTALSALLVFWLALLL), 116–136 (LLAATIYLTSLLVYGIGTYSV), 179–199 (FMTKGFLALALPVISVLPVAL), 207–227 (LLLFGPLAIVVAVLLSAPWAL), 258–278 (APFWYYLPVLIVGTFPWLALL), 296–316 (FLLLCWMVMPLLFFSIAKGKL), 319–339 (YILPCFAPLALLMAAWISGLA), 355–375 (LAFGSVLALAVAALGLGIIMP), 384–404 (LTIVSGVVCFVGWVAFAAVSL), and 410–430 (WGYLVAGCPLFLALLVGGSIP).

Belongs to the glycosyltransferase 83 family.

Its subcellular location is the cell inner membrane. The enzyme catalyses 4-amino-4-deoxy-alpha-L-arabinopyranosyl di-trans,octa-cis-undecaprenyl phosphate + lipid IVA = lipid IIA + di-trans,octa-cis-undecaprenyl phosphate.. Its pathway is lipopolysaccharide metabolism; 4-amino-4-deoxy-beta-L-arabinose-lipid A biosynthesis. Functionally, catalyzes the transfer of the L-Ara4N moiety of the glycolipid undecaprenyl phosphate-alpha-L-Ara4N to lipid A. The modified arabinose is attached to lipid A and is required for resistance to polymyxin and cationic antimicrobial peptides. This chain is Undecaprenyl phosphate-alpha-4-amino-4-deoxy-L-arabinose arabinosyl transferase, found in Pectobacterium carotovorum subsp. carotovorum (strain PC1).